Here is a 945-residue protein sequence, read N- to C-terminus: Glutamyl aminopeptidase (945 aa).

At 1–18 (MNFAEEEPSKKYCIKGKH) the chain is on the cytoplasmic side. A helical; Signal-anchor for type II membrane protein transmembrane segment spans residues 19 to 39 (VAIICGVVVAVGLIVGLSVGL). Residues 40–945 (TRSCEQDTTP…SIREWFASLP (906 aa)) lie on the Extracellular side of the membrane. Positions 43-77 (CEQDTTPAPSQPPPEASTALPPQDQNVCPDSEDES) are disordered. 2 N-linked (GlcNAc...) asparagine glycosylation sites follow: Asn116 and Asn189. Residue Glu215 participates in substrate binding. N-linked (GlcNAc...) asparagine glycosylation is present at Asn316. 349–353 (GAMEN) contacts substrate. Residue His385 coordinates Zn(2+). Residue Glu386 is the Proton acceptor of the active site. His389 and Glu408 together coordinate Zn(2+). Residues Asn546, Asn601, Asn637, Asn669, Asn754, and Asn792 are each glycosylated (N-linked (GlcNAc...) asparagine). Residue Arg878 participates in substrate binding.

The protein belongs to the peptidase M1 family. In terms of assembly, homodimer; disulfide-linked. Requires Zn(2+) as cofactor. In terms of tissue distribution, early B-lineage cells and certain stromal cell of hemopoietic tissues. Also expressed by capillary endothelial cells, placenta, and epithelial cells of the intestine and proximal renal tubules.

It localises to the cell membrane. The catalysed reaction is Release of N-terminal glutamate (and to a lesser extent aspartate) from a peptide.. Substrate specificity is modulated by calcium which enhances the enzymatic activity for cleavage of acidic residues while reducing its activity with basic residues. Inhibited by aminopeptidase inhibitors amastatin and bestatin. In terms of biological role, regulates central hypertension through its calcium-modulated preference to cleave N-terminal acidic residues from peptides such as angiotensin II. This Mus musculus (Mouse) protein is Glutamyl aminopeptidase (Enpep).